The sequence spans 795 residues: Arcadin-4 (795 aa).

3 coiled-coil regions span residues 205–253 (YSGL…HEQI), 323–412 (YDAL…YTSL), and 450–618 (FGGV…LKKR).

It localises to the cytoplasm. Its subcellular location is the cytoskeleton. Part of an actin-like archaeal cytoskeleton. This is Arcadin-4 from Pyrobaculum calidifontis (strain DSM 21063 / JCM 11548 / VA1).